We begin with the raw amino-acid sequence, 401 residues long: MAKLTVEDLPLEGKKVLMRVDFNVPIKDGVVGDDNRIVAALPTIKYVIDHGGRAILFSHLGRIKKEEDKPGLSLRPVAERLSNLLNKPVTFVPVTEGKQLEDAIDNMKNGDVLLVQNTRYEDVKDGEYVKRESGNDPELGKYWASLGDVFVNDAFGTAHRKHASNVGIATNMPGKAAAGYLMEKEIKFLGDAVDNPERPFVAILGGAKVSDKIGVIDNLLDKADKIIIGGGMAYTFYAAKGIKVGNSLVEKDKIDVAKQILDKAGDKLVLPIDNVVADKFNNDADTKVVEGDIDNGWMALDIGPKSVEEFKNVLKDAKTVVWNGPMGVFEMPNFAKGTLEIGKFLGTLTDATTIVGGGDSTAAVKELGVADKLTHISTGGGASLTYLEGNELPGIAAISDK.

Substrate is bound by residues 21-23, Arg36, 59-62, Arg119, and Arg160; these read DFN and HLGR. ATP is bound by residues Lys212, Glu330, and 357–360; that span reads GGDS.

The protein belongs to the phosphoglycerate kinase family. As to quaternary structure, monomer.

The protein localises to the cytoplasm. The enzyme catalyses (2R)-3-phosphoglycerate + ATP = (2R)-3-phospho-glyceroyl phosphate + ADP. It participates in carbohydrate degradation; glycolysis; pyruvate from D-glyceraldehyde 3-phosphate: step 2/5. The sequence is that of Phosphoglycerate kinase from Limosilactobacillus reuteri subsp. reuteri (strain JCM 1112) (Lactobacillus reuteri).